Reading from the N-terminus, the 446-residue chain is Trigger factor (446 aa).

Residues 163–248 (GDIVTIDFKG…VRGIKRKKLA (86 aa)) form the PPIase FKBP-type domain. The interval 423–446 (SKPVPPREQGAAGETAETAEATPA) is disordered. Low complexity predominate over residues 432 to 446 (GAAGETAETAEATPA).

This sequence belongs to the FKBP-type PPIase family. Tig subfamily.

It is found in the cytoplasm. It catalyses the reaction [protein]-peptidylproline (omega=180) = [protein]-peptidylproline (omega=0). Its function is as follows. Involved in protein export. Acts as a chaperone by maintaining the newly synthesized protein in an open conformation. Functions as a peptidyl-prolyl cis-trans isomerase. The polypeptide is Trigger factor (Moorella thermoacetica (strain ATCC 39073 / JCM 9320)).